Consider the following 1299-residue polypeptide: Tenascin-N (1299 aa).

Positions 1-28 (MSLQEMFRFPMGLLLGSVLLVASAPATL) are cleaved as a signal peptide. EGF-like domains follow at residues 167 to 198 (ERLACPGACSGHGRCVDGRCLCHEPYVGADCG), 199 to 229 (YPACPENCSGHGECVRGVCQCHEDFMSEDCS), and 230 to 260 (EKRCPGDCSGHGFCDTGECYCEEGFTGLDCA). 9 cysteine pairs are disulfide-bonded: cysteine 171-cysteine 181, cysteine 175-cysteine 186, cysteine 188-cysteine 197, cysteine 202-cysteine 212, cysteine 206-cysteine 217, cysteine 219-cysteine 228, cysteine 233-cysteine 243, cysteine 237-cysteine 248, and cysteine 250-cysteine 259. Fibronectin type-III domains lie at 264 to 352 (TPQG…TDLA), 353 to 444 (VLGT…TEID), 445 to 532 (SPTN…TEID), 533 to 623 (SPAN…IDSP), 624 to 709 (KNLV…TDID), 710 to 800 (SPQN…IDSP), 801 to 886 (QNLV…TEID), 887 to 976 (GPKN…LDPP), and 977 to 1063 (RNLR…VGAR). Positions 605-624 (GDRESKKADTNAPTDIDSPK) are disordered. Over residues 960-977 (QESKKADTKAQTELDPPR) the composition is skewed to basic and acidic residues. The segment at 960–982 (QESKKADTKAQTELDPPRNLRPS) is disordered. A Fibrinogen C-terminal domain is found at 1061–1278 (GARFPHPSDC…YVELKIRPHG (218 aa)). An N-linked (GlcNAc...) asparagine glycan is attached at asparagine 1149.

It belongs to the tenascin family. As to quaternary structure, homohexamer. As to expression, not detected in normal adult mammary tissues or brain but expressed in most breast tumors and brain tumors, such as glioblastomas, astrocytomas and oligodendrogliomas, tested. In brain tumors, detected around the endothelial cell layer of the clood vessels.

Its subcellular location is the secreted. The protein resides in the extracellular space. It localises to the extracellular matrix. In terms of biological role, extracellular matrix protein that seems to be a ligand for ITGA8:ITGB1, ITGAV:ITGB1 and ITGA4:ITGB1. Involved in neurite outgrowth and cell migration in hippocampal explants. During endochondral bone formation, inhibits proliferation and differentiation of proteoblasts mediated by canonical WNT signaling. In tumors, stimulates angiogenesis by elongation, migration and sprouting of endothelial cells. Expressed in most mammary tumors, may facilitate tumorigenesis by supporting the migratory behavior of breast cancer cells. The sequence is that of Tenascin-N from Homo sapiens (Human).